Consider the following 303-residue polypeptide: Probable 5-dehydro-4-deoxyglucarate dehydratase (303 aa).

The protein belongs to the DapA family.

The catalysed reaction is 5-dehydro-4-deoxy-D-glucarate + H(+) = 2,5-dioxopentanoate + CO2 + H2O. It participates in carbohydrate acid metabolism; D-glucarate degradation; 2,5-dioxopentanoate from D-glucarate: step 2/2. The sequence is that of Probable 5-dehydro-4-deoxyglucarate dehydratase from Pseudomonas syringae pv. syringae (strain B728a).